The sequence spans 601 residues: Elongation factor 4 (601 aa).

Positions 6-188 constitute a tr-type G domain; sequence SRTRNFSIIA…DIVKNVPPPK (183 aa). Residues 18–23 and 135–138 contribute to the GTP site; these read DHGKST and NKID.

It belongs to the TRAFAC class translation factor GTPase superfamily. Classic translation factor GTPase family. LepA subfamily.

It localises to the cell membrane. The catalysed reaction is GTP + H2O = GDP + phosphate + H(+). Required for accurate and efficient protein synthesis under certain stress conditions. May act as a fidelity factor of the translation reaction, by catalyzing a one-codon backward translocation of tRNAs on improperly translocated ribosomes. Back-translocation proceeds from a post-translocation (POST) complex to a pre-translocation (PRE) complex, thus giving elongation factor G a second chance to translocate the tRNAs correctly. Binds to ribosomes in a GTP-dependent manner. In Clostridioides difficile (strain 630) (Peptoclostridium difficile), this protein is Elongation factor 4.